The primary structure comprises 245 residues: tRNA pseudouridine synthase A (245 aa).

The active-site Nucleophile is the D52. Y111 contributes to the substrate binding site.

Belongs to the tRNA pseudouridine synthase TruA family. In terms of assembly, homodimer.

It catalyses the reaction uridine(38/39/40) in tRNA = pseudouridine(38/39/40) in tRNA. Formation of pseudouridine at positions 38, 39 and 40 in the anticodon stem and loop of transfer RNAs. This is tRNA pseudouridine synthase A from Rickettsia felis (strain ATCC VR-1525 / URRWXCal2) (Rickettsia azadi).